We begin with the raw amino-acid sequence, 219 residues long: Orotate phosphoribosyltransferase (219 aa).

Lys26 provides a ligand contact to 5-phospho-alpha-D-ribose 1-diphosphate. 34–35 (FF) serves as a coordination point for orotate. Residues 72-73 (YK), Arg98, Lys99, Lys102, His104, and 124-132 (DDVITAGTA) contribute to the 5-phospho-alpha-D-ribose 1-diphosphate site. Orotate is bound by residues Thr128 and Arg156.

It belongs to the purine/pyrimidine phosphoribosyltransferase family. PyrE subfamily. Homodimer. Mg(2+) is required as a cofactor.

The catalysed reaction is orotidine 5'-phosphate + diphosphate = orotate + 5-phospho-alpha-D-ribose 1-diphosphate. Its pathway is pyrimidine metabolism; UMP biosynthesis via de novo pathway; UMP from orotate: step 1/2. In terms of biological role, catalyzes the transfer of a ribosyl phosphate group from 5-phosphoribose 1-diphosphate to orotate, leading to the formation of orotidine monophosphate (OMP). This is Orotate phosphoribosyltransferase from Xylella fastidiosa (strain Temecula1 / ATCC 700964).